The primary structure comprises 248 residues: MALYRSRGIVLRSIRYGEADRILDIYTRDAGLVSCIAKGIRRTRSRFGARLEPFSCVDFMAYRGRTLDTITQAESLRSFRGVRERLDRLQAAAGMAGVLHALSGGTPDRRTFNLLYRALDALEKGEEGFGMIEASFGLKLAVLSGYAPRLDGCAECGGDVPGEGARFAPAAGGFLCRDCRSDAPPDSFPVPPGTLGRLRELAALPLAEAASGRGLEEALRRVVRAHVLAHAPGAASLATPAGTAGGRP.

This sequence belongs to the RecO family.

Involved in DNA repair and RecF pathway recombination. The chain is DNA repair protein RecO from Rubrobacter xylanophilus (strain DSM 9941 / JCM 11954 / NBRC 16129 / PRD-1).